The following is a 98-amino-acid chain: MSADPRHYDIIVSPVITEKATNLTEQNKVVFRVAPKATKPQIKEAVERLFDVKVTGVNTLTTKGKKKFFRGQRGQRSDVKKAIVTLAEGDTIDVTTGL.

It belongs to the universal ribosomal protein uL23 family. Part of the 50S ribosomal subunit. Contacts protein L29, and trigger factor when it is bound to the ribosome.

Its function is as follows. One of the early assembly proteins it binds 23S rRNA. One of the proteins that surrounds the polypeptide exit tunnel on the outside of the ribosome. Forms the main docking site for trigger factor binding to the ribosome. This chain is Large ribosomal subunit protein uL23, found in Methylorubrum extorquens (strain CM4 / NCIMB 13688) (Methylobacterium extorquens).